A 72-amino-acid polypeptide reads, in one-letter code: Translation initiation factor IF-1 (72 aa).

Positions 1–72 constitute an S1-like domain; sequence MAKEELLEFP…TKGRINYRFK (72 aa).

This sequence belongs to the IF-1 family. Component of the 30S ribosomal translation pre-initiation complex which assembles on the 30S ribosome in the order IF-2 and IF-3, IF-1 and N-formylmethionyl-tRNA(fMet); mRNA recruitment can occur at any time during PIC assembly.

The protein localises to the cytoplasm. In terms of biological role, one of the essential components for the initiation of protein synthesis. Stabilizes the binding of IF-2 and IF-3 on the 30S subunit to which N-formylmethionyl-tRNA(fMet) subsequently binds. Helps modulate mRNA selection, yielding the 30S pre-initiation complex (PIC). Upon addition of the 50S ribosomal subunit IF-1, IF-2 and IF-3 are released leaving the mature 70S translation initiation complex. The chain is Translation initiation factor IF-1 from Dinoroseobacter shibae (strain DSM 16493 / NCIMB 14021 / DFL 12).